Reading from the N-terminus, the 403-residue chain is Glucose-signaling factor 2 (403 aa).

Residues 1–177 (MEIYIRLNAD…QEVQANYSSL (177 aa)) are Lumenal-facing. Residues Asn-89 and Asn-173 are each glycosylated (N-linked (GlcNAc...) asparagine). A helical; Signal-anchor for type II membrane protein transmembrane segment spans residues 178–198 (VAQWLFFVMHIFKVGIITLFL). Residues 199-403 (KLGIANPISF…IKKNDLKKSN (205 aa)) are Cytoplasmic-facing. Residues 330-388 (ELENNLKKILEEYDGDIGKMNAEIRRFRRFGIYEPDEKLASLVKLRREIADEKEKASNN) are a coiled coil.

Its subcellular location is the endoplasmic reticulum membrane. Functionally, may be involved in the secretion of hexose transporters from the endoplasmic reticulum. Involved in secretion of GAL2 and HXT1. This is Glucose-signaling factor 2 (GSF2) from Saccharomyces cerevisiae (strain ATCC 204508 / S288c) (Baker's yeast).